The primary structure comprises 132 residues: Small ribosomal subunit protein uS8 (132 aa).

The protein belongs to the universal ribosomal protein uS8 family. Part of the 30S ribosomal subunit. Contacts proteins S5 and S12.

Its function is as follows. One of the primary rRNA binding proteins, it binds directly to 16S rRNA central domain where it helps coordinate assembly of the platform of the 30S subunit. The chain is Small ribosomal subunit protein uS8 from Rhodopseudomonas palustris (strain BisB18).